Consider the following 156-residue polypeptide: Myosin regulatory light chain, striated adductor muscle (156 aa).

Position 1 is a blocked amino end (Ala) (Ala-1). 2 EF-hand domains span residues 15–50 (KQIQ…LGRT) and 84–119 (DTEE…MGDN). Residues Asp-28, Asp-30, Asp-32, and Asp-39 each contribute to the Ca(2+) site.

Functionally, in molluscan muscle, calcium regulation is associated with myosin rather than with actin. Muscle myosin contains two types of light chains: the catalytic light chain, essential for ATPase activity, and the regulatory light chain, a calcium-binding protein responsible for Ca(2+) dependent binding and Ca(2+) dependent Mg-ATPase activity. This chain is Myosin regulatory light chain, striated adductor muscle, found in Mizuhopecten yessoensis (Japanese scallop).